The following is a 281-amino-acid chain: Large ribosomal subunit protein uL2 (281 aa).

The tract at residues 224-281 (RGSAMNPNDHPHGGGEGHQPIGRKSPMTPWGKKALGVKTRKTKKASNQFIIRRRKESK) is disordered.

It belongs to the universal ribosomal protein uL2 family. Part of the 50S ribosomal subunit. Forms a bridge to the 30S subunit in the 70S ribosome.

One of the primary rRNA binding proteins. Required for association of the 30S and 50S subunits to form the 70S ribosome, for tRNA binding and peptide bond formation. It has been suggested to have peptidyltransferase activity; this is somewhat controversial. Makes several contacts with the 16S rRNA in the 70S ribosome. The sequence is that of Large ribosomal subunit protein uL2 from Metamycoplasma arthritidis (strain 158L3-1) (Mycoplasma arthritidis).